A 251-amino-acid chain; its full sequence is Sugar fermentation stimulation protein homolog (251 aa).

The protein belongs to the SfsA family.

The protein is Sugar fermentation stimulation protein homolog of Prochlorococcus marinus (strain SARG / CCMP1375 / SS120).